Consider the following 562-residue polypeptide: Protein wntless (562 aa).

Over 1-13 (MSGTILENLSGRK) the chain is Cytoplasmic. Residues 14–34 (LSILVSSLLLCQVACFLIGGL) traverse the membrane as a helical segment. The Lumenal portion of the chain corresponds to 35–239 (YAPVPAGHQI…AIHQNGGFTQ (205 aa)). 2 N-linked (GlcNAc...) asparagine glycosylation sites follow: asparagine 58 and asparagine 103. Residues 240–260 (VWLLLKSVLFPFIIGIMVWFW) form a helical membrane-spanning segment. The Cytoplasmic segment spans residues 261–270 (RRVHILQRSP). The chain crosses the membrane as a helical span at residues 271-291 (ALLEYMLLYLGGALSFLNLPL). Residues 292–311 (EYLTLSFEMPYMLLLSDVRQ) are Lumenal-facing. Residues 312–332 (GIFYAMLLSFWLVFAGEHMLI) form a helical membrane-spanning segment. The Cytoplasmic segment spans residues 333–344 (QDSPNKSTIRSR). A helical transmembrane segment spans residues 345-365 (YWKHLSAVVVGCISLFVFDIC). Topologically, residues 366–390 (ERGMQLRNPFYSIWTTPLGAKVAMS) are lumenal. Residues 391 to 411 (FIVLAGVSAGIYFLFLCYMVW) form a helical membrane-spanning segment. Residues 412–441 (KVFKDIGDKRTSLPSMSQARRLHYEGLIYR) are Cytoplasmic-facing. Residues 442 to 462 (FKFLMLATLLCAGLTVAGFIM) traverse the membrane as a helical segment. Over 463-482 (GQMAEGHWKWNEDIEIQLTS) the chain is Lumenal. The chain crosses the membrane as a helical span at residues 483–503 (AFLTGVYGMWNIYIFALLILY). The Cytoplasmic segment spans residues 504–562 (APSHKQWPTMRHSDETTQSNENIVASAASEEIEFSNLPSDSNPSEISSLTSFTRKVAFD). The disordered stretch occupies residues 538–562 (SNLPSDSNPSEISSLTSFTRKVAFD). Positions 539 to 556 (NLPSDSNPSEISSLTSFT) are enriched in polar residues.

The protein belongs to the wntless family. In terms of assembly, interacts with wg; in the Golgi. Interacts with Vps35, a component of the retromer complex; wls stability is regulated by Vps35.

It is found in the presynaptic cell membrane. The protein resides in the postsynaptic cell membrane. Its subcellular location is the cell membrane. It localises to the endoplasmic reticulum membrane. The protein localises to the endosome membrane. It is found in the golgi apparatus membrane. Functionally, a segment polarity gene required for wingless (wg)-dependent patterning processes, acting in both wg-sending cells and wg-target cells. In non-neuronal cells wls directs wg secretion. The wls traffic loop encompasses the Golgi, the cell surface, an endocytic compartment and a retrograde route leading back to the Golgi, and involves clathrin-mediated endocytosis and the retromer complex (a conserved protein complex consisting of Vps35 and Vps26). In neuronal cells (the larval motorneuron NMJ), the wg signal moves across the synapse via the release of wls-containing exosome-like vesicles. Postsynaptic wls is required for the trafficking of fz2 through the fz2-interacting protein Grip. This is Protein wntless from Drosophila mojavensis (Fruit fly).